Consider the following 205-residue polypeptide: High frequency lysogenization protein HflD homolog (205 aa).

The protein belongs to the HflD family.

It is found in the cytoplasm. The protein resides in the cell inner membrane. In Shewanella baltica (strain OS155 / ATCC BAA-1091), this protein is High frequency lysogenization protein HflD homolog.